The chain runs to 226 residues: MNEIKETPIVILNFKTYLESTGENALKLAKGSEMVAEETGVNIMVHPQYADIYRIAHEVNIPVLAQHIDTIDAGGHTGSILPECVKEAGAVGTLINHSERRVELFEIDAAIKKADSLGLSTVVCTNNIETSSAAATLNPDFVAIEPPELIGSGIPVSKPEPEIVEKTVESIHNINPEVRVLCGAGISTGDDLKAAIDLGSEGVLLASGIILADDPKKALLDLVSKI.

Residue 13–15 coordinates substrate; that stretch reads NFK. H97 (electrophile) is an active-site residue. The active-site Proton acceptor is the E145. Substrate-binding positions include I150, G185, and 206 to 207; that span reads AS.

This sequence belongs to the triosephosphate isomerase family. Homotetramer; dimer of dimers.

The protein resides in the cytoplasm. It catalyses the reaction D-glyceraldehyde 3-phosphate = dihydroxyacetone phosphate. It functions in the pathway carbohydrate biosynthesis; gluconeogenesis. It participates in carbohydrate degradation; glycolysis; D-glyceraldehyde 3-phosphate from glycerone phosphate: step 1/1. Its function is as follows. Involved in the gluconeogenesis. Catalyzes stereospecifically the conversion of dihydroxyacetone phosphate (DHAP) to D-glyceraldehyde-3-phosphate (G3P). This is Triosephosphate isomerase from Methanobacterium bryantii.